A 930-amino-acid chain; its full sequence is Protein ARABIDILLO 1 (930 aa).

The Nuclear localization signal signature appears at 3 to 8; that stretch reads RRVRRK. Residues 44–90 form the F-box domain; the sequence is FVDWISLPYDTVLQLFTCLNYRDRASLASTCKTWRCLGASSCLWTSL. 13 ARM repeats span residues 172 to 212, 244 to 285, 379 to 418, 428 to 467, 469 to 508, 510 to 552, 554 to 594, 600 to 639, 641 to 683, 685 to 724, 726 to 766, 790 to 831, and 835 to 875; these read RITS…KHCP, TSNI…TSSQ, PEGL…TFVV, CGRA…NLSV, ANIA…NLSV, EEHK…NLAA, DKCS…NLAA, NNNA…NLSF, DKNR…GLSV, EANS…NLAF, PGNA…YMFD, LDGA…QVTE, and IQEA…QFTI.

The protein belongs to the beta-catenin family. As to quaternary structure, interacts with SNL1. Interacts with MYB53, MYB92 and MYB93. Expressed ubiquitously, with higher levels in root tip, pericycle and vasculature.

The protein resides in the nucleus. Its function is as follows. Promotes lateral root initiation and development, independently of auxin (IAA) and abscisis acid (ABA). The protein is Protein ARABIDILLO 1 (FBX5) of Arabidopsis thaliana (Mouse-ear cress).